A 65-amino-acid chain; its full sequence is Toxin VmKTx1 (65 aa).

The first 21 residues, 1 to 21, serve as a signal peptide directing secretion; sequence MKTSCLLTILLLSFLVAVAVA. Positions 22–28 are excised as a propeptide; the sequence is EGERSAR. Disulfide bonds link C34–C54, C40–C59, C44–C61, and C49–C64. The residue at position 64 (C64) is a Cysteine amide.

The protein belongs to the short scorpion toxin superfamily. Potassium channel inhibitor family. Alpha-KTx 23 subfamily. In terms of tissue distribution, expressed by the venom gland.

Its subcellular location is the secreted. Its function is as follows. Voltage-gated potassium channel inhibitor. Selectively and reversibly binds (Kd=0.77 nM) and blocks hKv1.3/KCNA3 potassium channels of human T-lymphocytes. Also shows a very weak effect on hKv1.2/KCNA2 (Kd=7.1 uM). Also reduces the fraction of CD40L expressing T cells that are stimulated by alphaCD3/alphaCD28. The polypeptide is Toxin VmKTx1 (Vaejovis mexicanus smithi (Mexican scorpion)).